The primary structure comprises 148 residues: Cytochrome c oxidase subunit 4, mitochondrial (148 aa).

The N-terminal 24 residues, 1-24 (MFALRSIRSATKAFQTTSIVSQRG), are a transit peptide targeting the mitochondrion.

In terms of assembly, slime mold cytochrome c oxidase consists of at least seven different polypeptides species, subunits I, II, III, IV, V, VI, and VIIe/s in order of MW.

It is found in the mitochondrion inner membrane. The catalysed reaction is 4 Fe(II)-[cytochrome c] + O2 + 8 H(+)(in) = 4 Fe(III)-[cytochrome c] + 2 H2O + 4 H(+)(out). Functionally, this protein is one of the nuclear-coded polypeptide chains of cytochrome c oxidase, the terminal oxidase in mitochondrial electron transport. This chain is Cytochrome c oxidase subunit 4, mitochondrial (cxdA), found in Dictyostelium discoideum (Social amoeba).